The primary structure comprises 204 residues: Molybdenum cofactor guanylyltransferase (204 aa).

GTP contacts are provided by residues 10-12 (LAG), Lys23, Asn51, Asp69, and Asp99. Asp99 is a binding site for Mg(2+).

This sequence belongs to the MobA family. In terms of assembly, monomer. Mg(2+) serves as cofactor.

Its subcellular location is the cytoplasm. It catalyses the reaction Mo-molybdopterin + GTP + H(+) = Mo-molybdopterin guanine dinucleotide + diphosphate. Functionally, transfers a GMP moiety from GTP to Mo-molybdopterin (Mo-MPT) cofactor (Moco or molybdenum cofactor) to form Mo-molybdopterin guanine dinucleotide (Mo-MGD) cofactor. In Shewanella piezotolerans (strain WP3 / JCM 13877), this protein is Molybdenum cofactor guanylyltransferase.